We begin with the raw amino-acid sequence, 196 residues long: Gastrula zinc finger protein XlCGF64.1 (196 aa).

7 C2H2-type zinc fingers span residues 6–28 (YECP…QRGH), 34–56 (FMCT…QFIH), 62–84 (YVCT…QRGH), 90–112 (FTCT…QFIH), 118–140 (YECT…QRGH), 146–168 (FMCT…QFIH), and 174–196 (LMCT…KLSH).

It belongs to the krueppel C2H2-type zinc-finger protein family.

It is found in the nucleus. In terms of biological role, may be involved in transcriptional regulation. In Xenopus laevis (African clawed frog), this protein is Gastrula zinc finger protein XlCGF64.1.